The following is a 118-amino-acid chain: V-type proton ATPase subunit G 3 (118 aa).

Residues 1-12 are compositionally biased toward polar residues; the sequence is MTSQSQGIQQLL. The interval 1–44 is disordered; the sequence is MTSQSQGIQQLLQAEKRAKDKLDEAKKRKGKRLRQAKEEAVAET. The stretch at 5 to 53 forms a coiled coil; sequence SQGIQQLLQAEKRAKDKLDEAKKRKGKRLRQAKEEAVAETDQYRMQMEK. A compositionally biased stretch (basic and acidic residues) spans 14–26; the sequence is AEKRAKDKLDEAK.

This sequence belongs to the V-ATPase G subunit family. V-ATPase is a heteromultimeric enzyme made up of two complexes: the ATP-hydrolytic V1 complex and the proton translocation V0 complex. The V1 complex consists of three catalytic AB heterodimers that form a heterohexamer, three peripheral stalks each consisting of EG heterodimers, one central rotor including subunits D and F, and the regulatory subunits C and H. The proton translocation complex V0 consists of the proton transport subunit a, a ring of proteolipid subunits c9c'', rotary subunit d, subunits e and f, and the accessory subunits ATP6AP1/Ac45 and ATP6AP2/PRR. In terms of tissue distribution, kidney.

Subunit of the V1 complex of vacuolar(H+)-ATPase (V-ATPase), a multisubunit enzyme composed of a peripheral complex (V1) that hydrolyzes ATP and a membrane integral complex (V0) that translocates protons. V-ATPase is responsible for acidifying and maintaining the pH of intracellular compartments and in some cell types, is targeted to the plasma membrane, where it is responsible for acidifying the extracellular environment. This chain is V-type proton ATPase subunit G 3 (Atp6v1g3), found in Mus musculus (Mouse).